Here is a 184-residue protein sequence, read N- to C-terminus: Mediator of RNA polymerase II transcription subunit 11 (184 aa).

Polar residues predominate over residues 142–152 (ATTKQETNINN). The interval 142 to 184 (ATTKQETNINNEDSEKEKQENITAIETKKESSENEDEDFDMIA) is disordered. A compositionally biased stretch (basic and acidic residues) spans 154–173 (DSEKEKQENITAIETKKESS). The span at 174 to 184 (ENEDEDFDMIA) shows a compositional bias: acidic residues.

It belongs to the Mediator complex subunit 11 family. In terms of assembly, component of the Mediator complex.

The protein resides in the nucleus. In terms of biological role, component of the Mediator complex, a coactivator involved in the regulated transcription of nearly all RNA polymerase II-dependent genes. Mediator functions as a bridge to convey information from gene-specific regulatory proteins to the basal RNA polymerase II transcription machinery. Mediator is recruited to promoters by direct interactions with regulatory proteins and serves as a scaffold for the assembly of a functional pre-initiation complex with RNA polymerase II and the general transcription factors. In Debaryomyces hansenii (strain ATCC 36239 / CBS 767 / BCRC 21394 / JCM 1990 / NBRC 0083 / IGC 2968) (Yeast), this protein is Mediator of RNA polymerase II transcription subunit 11 (MED11).